Reading from the N-terminus, the 59-residue chain is Putative conotoxin (59 aa).

Positions 1-25 are cleaved as a signal peptide; that stretch reads MGMRMMFTVFLLVVLATTVVPITLA. Residues 26–47 constitute a propeptide that is removed on maturation; sequence SATDGRNAAANARVSPVISKSS.

Belongs to the conotoxin A superfamily. As to expression, expressed by the venom duct.

The protein resides in the secreted. Its function is as follows. Acts as a neurotoxin. In Conus imperialis (Imperial cone), this protein is Putative conotoxin.